A 290-amino-acid polypeptide reads, in one-letter code: GTPase Era (290 aa).

Residues Lys-2–Glu-169 form the Era-type G domain. The segment at Gly-10–Ser-17 is G1. Gly-10–Ser-17 provides a ligand contact to GTP. Residues Gln-36 to Asn-40 are G2. Residues Asp-57–Gly-60 form a G3 region. Residues Asp-57–Phe-61 and Asn-119–Asp-122 contribute to the GTP site. The segment at Asn-119 to Asp-122 is G4. The tract at residues Ile-148–Ala-150 is G5. A KH type-2 domain is found at Leu-200–Lys-276.

The protein belongs to the TRAFAC class TrmE-Era-EngA-EngB-Septin-like GTPase superfamily. Era GTPase family. Monomer.

It localises to the cytoplasm. The protein localises to the cell inner membrane. In terms of biological role, an essential GTPase that binds both GDP and GTP, with rapid nucleotide exchange. Plays a role in 16S rRNA processing and 30S ribosomal subunit biogenesis and possibly also in cell cycle regulation and energy metabolism. The polypeptide is GTPase Era (Borrelia turicatae (strain 91E135)).